The chain runs to 264 residues: Small ribosomal subunit protein uS2 (264 aa).

The interval 222–246 is disordered; it reads GRSENKDEQNEQGEQIAPVTNEEKQ.

The protein belongs to the universal ribosomal protein uS2 family.

In Helicobacter hepaticus (strain ATCC 51449 / 3B1), this protein is Small ribosomal subunit protein uS2.